The primary structure comprises 313 residues: MNKFSSVWVFSDTPSRLPELMSGAQAVGEKVNAFVLNEADSATACHLGADHVWLLSGKPEDRMIEDYAAAMAETIRQHSEGGAVLLPNTRRGKLLAAKLGYRLSAAVSNDASDVSLQDGKAAVKHMVYGGLAIGAETIASPFAVITLSSGTFDAQQPDASRSGEMHTVQWQAPATAVTRTATQARQSNSVDLDKARLVVSVGRGIGSKENISLAEALCQTIGAELACSRPVAENEKWMEHERYVGISNLMLKPELYLAVGISGQIQHMVGANGAQTIFAINKDKNAPIFQYADFGIVGDALKILPALTAALAR.

Position 255 to 283 (255 to 283) interacts with FAD; that stretch reads LYLAVGISGQIQHMVGANGAQTIFAINKD.

Belongs to the ETF alpha-subunit/FixB family. Heterodimer of FixA and FixB.

The protein operates within amine and polyamine metabolism; carnitine metabolism. Required for anaerobic carnitine reduction. May bring reductant to CaiA. The sequence is that of Protein FixB from Salmonella agona (strain SL483).